The primary structure comprises 176 residues: Large ribosomal subunit protein uL10 (176 aa).

Belongs to the universal ribosomal protein uL10 family. As to quaternary structure, part of the ribosomal stalk of the 50S ribosomal subunit. The N-terminus interacts with L11 and the large rRNA to form the base of the stalk. The C-terminus forms an elongated spine to which L12 dimers bind in a sequential fashion forming a multimeric L10(L12)X complex.

Forms part of the ribosomal stalk, playing a central role in the interaction of the ribosome with GTP-bound translation factors. In Streptomyces antibioticus, this protein is Large ribosomal subunit protein uL10 (rplJ).